The chain runs to 101 residues: Isochorismate pyruvate lyase (101 aa).

Positions 4–94 (PEDCTGLADI…WYIAEQIKYW (91 aa)) constitute a Chorismate mutase domain. The substrate site is built by arginine 14, arginine 31, lysine 42, and glutamine 90.

Dimer of dimers.

It carries out the reaction isochorismate = salicylate + pyruvate. The enzyme catalyses chorismate = prephenate. It participates in siderophore biosynthesis; salicylate biosynthesis. With respect to regulation, inhibited by endo-oxabicyclic diacid resembling to the conformation of the transition state. Involved in the incorporation of salicylate into the siderophore pyochelin. Catalyzes the elimination of the enolpyruvyl side chain from isochorismate to yield salicylate and pyruvate via a rare pericyclic hydrogen transfer mechanism from C2 to C5. PchB also catalyzes the nonphysiological Claisen rearrangement of chorismate to prephenate in which the pyruvylenol tail is transferred from a C3 ether linkage to a C1-C9 linkage. The polypeptide is Isochorismate pyruvate lyase (Pseudomonas aeruginosa (strain ATCC 15692 / DSM 22644 / CIP 104116 / JCM 14847 / LMG 12228 / 1C / PRS 101 / PAO1)).